The chain runs to 263 residues: Phosphatidylglycerol--prolipoprotein diacylglyceryl transferase (263 aa).

4 helical membrane passes run 15 to 35 (ISIH…VYLA), 52 to 72 (FILL…VIFQ), 83 to 103 (IFAI…GAAV), and 112 to 132 (AIAV…AQSI). Residue Arg-134 participates in a 1,2-diacyl-sn-glycero-3-phospho-(1'-sn-glycerol) binding. The next 3 membrane-spanning stretches (helical) occupy residues 170 to 190 (VPTF…ILGL), 200 to 220 (GDVT…IEGM), and 230 to 250 (LRVS…LLYF).

Belongs to the Lgt family.

It is found in the cell membrane. The catalysed reaction is L-cysteinyl-[prolipoprotein] + a 1,2-diacyl-sn-glycero-3-phospho-(1'-sn-glycerol) = an S-1,2-diacyl-sn-glyceryl-L-cysteinyl-[prolipoprotein] + sn-glycerol 1-phosphate + H(+). It participates in protein modification; lipoprotein biosynthesis (diacylglyceryl transfer). Its function is as follows. Catalyzes the transfer of the diacylglyceryl group from phosphatidylglycerol to the sulfhydryl group of the N-terminal cysteine of a prolipoprotein, the first step in the formation of mature lipoproteins. This is Phosphatidylglycerol--prolipoprotein diacylglyceryl transferase from Streptococcus thermophilus (strain ATCC BAA-250 / LMG 18311).